The sequence spans 402 residues: Ferrochelatase, mitochondrial (402 aa).

The N-terminal 33 residues, 1-33, are a transit peptide targeting the mitochondrion; the sequence is MAAAGRAARPLVAGGRQLRVPLRWRGQVAAAAP. Protoporphyrin IX-binding residues include arginine 94, tyrosine 102, and serine 109. Cysteine 175 is a binding site for [2Fe-2S] cluster. Catalysis depends on residues histidine 209 and aspartate 362. Residues cysteine 382, cysteine 385, and cysteine 390 each contribute to the [2Fe-2S] cluster site.

It belongs to the ferrochelatase family. As to quaternary structure, homodimer. Homotetramer. It depends on [2Fe-2S] cluster as a cofactor.

It localises to the mitochondrion inner membrane. The catalysed reaction is heme b + 2 H(+) = protoporphyrin IX + Fe(2+). The protein operates within porphyrin-containing compound metabolism; protoheme biosynthesis; protoheme from protoporphyrin-IX: step 1/1. In terms of biological role, catalyzes the ferrous insertion into protoporphyrin IX. This Gallus gallus (Chicken) protein is Ferrochelatase, mitochondrial.